Consider the following 298-residue polypeptide: Lipoyl synthase (298 aa).

The [4Fe-4S] cluster site is built by Cys40, Cys45, Cys51, Cys67, Cys71, Cys74, and Ser280. In terms of domain architecture, Radical SAM core spans 53–269 (AVRRTATFMI…KEIAMAKGFS (217 aa)).

The protein belongs to the radical SAM superfamily. Lipoyl synthase family. Requires [4Fe-4S] cluster as cofactor.

The protein resides in the cytoplasm. It carries out the reaction [[Fe-S] cluster scaffold protein carrying a second [4Fe-4S](2+) cluster] + N(6)-octanoyl-L-lysyl-[protein] + 2 oxidized [2Fe-2S]-[ferredoxin] + 2 S-adenosyl-L-methionine + 4 H(+) = [[Fe-S] cluster scaffold protein] + N(6)-[(R)-dihydrolipoyl]-L-lysyl-[protein] + 4 Fe(3+) + 2 hydrogen sulfide + 2 5'-deoxyadenosine + 2 L-methionine + 2 reduced [2Fe-2S]-[ferredoxin]. It participates in protein modification; protein lipoylation via endogenous pathway; protein N(6)-(lipoyl)lysine from octanoyl-[acyl-carrier-protein]. Functionally, catalyzes the radical-mediated insertion of two sulfur atoms into the C-6 and C-8 positions of the octanoyl moiety bound to the lipoyl domains of lipoate-dependent enzymes, thereby converting the octanoylated domains into lipoylated derivatives. The sequence is that of Lipoyl synthase from Bacillus pumilus (strain SAFR-032).